A 212-amino-acid polypeptide reads, in one-letter code: Thymidylate kinase (212 aa).

G10–T17 contributes to the ATP binding site.

It belongs to the thymidylate kinase family.

It catalyses the reaction dTMP + ATP = dTDP + ADP. In terms of biological role, phosphorylation of dTMP to form dTDP in both de novo and salvage pathways of dTTP synthesis. This Baumannia cicadellinicola subsp. Homalodisca coagulata protein is Thymidylate kinase.